The primary structure comprises 309 residues: tRNA hydroxylation protein P2 (309 aa).

This sequence belongs to the peptidase U32 family.

Involved in prephenate-dependent formation of 5-hydroxyuridine (ho5U) modification at position 34 in tRNAs, the first step in 5-methoxyuridine (mo5U) biosynthesis. The polypeptide is tRNA hydroxylation protein P2 (Bacillus subtilis (strain 168)).